The following is a 180-amino-acid chain: E1B protein, small T-antigen (180 aa).

Residues Gly-142–Asn-180 form a disordered region. Positions Gln-157–Ser-172 are enriched in basic and acidic residues.

This sequence belongs to the adenoviridae E1B 19 kDa protein family.

In Simian adenovirus serotype 7 (SAdV-7), this protein is E1B protein, small T-antigen.